The following is a 376-amino-acid chain: MSKAVLVLEDGRVFTGRPFGATGQALGEAVFSTGMSGYQETLTDPSYHRQIVVATAPQIGNTGWNGEDSESRGERIWVAGYAVRDPSPRASNWRATGTLEDELIRQRIVGIAGIDTRAVVRHLRSRGSMKAGVFSDGALAEPADLIARVRAQQSMLGADLAGEVSTAEPYVVEPDGPPGVSRFTVAALDLGIKTNTPRNFARRGIRCHVLPASTTFEQIAELNPHGVFLSNGPGDPATADHVVALTREVLGAGIPLFGICFGNQILGRALGLSTYKMVFGHRGINIPVVDHATGRVAVTAQNHGFALQGEAGQSFATPFGPAVVSHTCANDGVVEGVKLVDGRAFSVQYHPEAAAGPHDAEYLFDQFVELMAGEGR.

The tract at residues 1–181 (MSKAVLVLED…VEPDGPPGVS (181 aa)) is nucleophile. The segment at 1–183 (MSKAVLVLED…PDGPPGVSRF (183 aa)) is CPSase. The L-glutamine site is built by Ser-46, Gly-232, Gly-234, Phe-261, Gln-264, Asn-302, Gly-304, and Phe-305. The region spanning 184–376 (TVAALDLGIK…FVELMAGEGR (193 aa)) is the Glutamine amidotransferase type-1 domain. Residues His-350 and Glu-352 contribute to the active site.

The protein belongs to the CarA family. Composed of two chains; the small (or glutamine) chain promotes the hydrolysis of glutamine to ammonia, which is used by the large (or ammonia) chain to synthesize carbamoyl phosphate. Tetramer of heterodimers (alpha,beta)4.

The catalysed reaction is hydrogencarbonate + L-glutamine + 2 ATP + H2O = carbamoyl phosphate + L-glutamate + 2 ADP + phosphate + 2 H(+). The enzyme catalyses L-glutamine + H2O = L-glutamate + NH4(+). It participates in amino-acid biosynthesis; L-arginine biosynthesis; carbamoyl phosphate from bicarbonate: step 1/1. The protein operates within pyrimidine metabolism; UMP biosynthesis via de novo pathway; (S)-dihydroorotate from bicarbonate: step 1/3. Its function is as follows. Small subunit of the glutamine-dependent carbamoyl phosphate synthetase (CPSase). CPSase catalyzes the formation of carbamoyl phosphate from the ammonia moiety of glutamine, carbonate, and phosphate donated by ATP, constituting the first step of 2 biosynthetic pathways, one leading to arginine and/or urea and the other to pyrimidine nucleotides. The small subunit (glutamine amidotransferase) binds and cleaves glutamine to supply the large subunit with the substrate ammonia. The chain is Carbamoyl phosphate synthase small chain from Mycobacterium tuberculosis (strain CDC 1551 / Oshkosh).